A 243-amino-acid chain; its full sequence is Leucyl/phenylalanyl-tRNA--protein transferase (243 aa).

The protein belongs to the L/F-transferase family.

It is found in the cytoplasm. The enzyme catalyses N-terminal L-lysyl-[protein] + L-leucyl-tRNA(Leu) = N-terminal L-leucyl-L-lysyl-[protein] + tRNA(Leu) + H(+). It catalyses the reaction N-terminal L-arginyl-[protein] + L-leucyl-tRNA(Leu) = N-terminal L-leucyl-L-arginyl-[protein] + tRNA(Leu) + H(+). The catalysed reaction is L-phenylalanyl-tRNA(Phe) + an N-terminal L-alpha-aminoacyl-[protein] = an N-terminal L-phenylalanyl-L-alpha-aminoacyl-[protein] + tRNA(Phe). Its function is as follows. Functions in the N-end rule pathway of protein degradation where it conjugates Leu, Phe and, less efficiently, Met from aminoacyl-tRNAs to the N-termini of proteins containing an N-terminal arginine or lysine. This Vibrio cholerae serotype O1 (strain ATCC 39541 / Classical Ogawa 395 / O395) protein is Leucyl/phenylalanyl-tRNA--protein transferase.